The chain runs to 231 residues: UPF0758 protein RBAM_025090 (231 aa).

The 123-residue stretch at 109–231 (VIRSPEDGAK…FVSLKEKGYL (123 aa)) folds into the MPN domain. Zn(2+) contacts are provided by His180, His182, and Asp193. Residues 180 to 193 (HNHPSGDPTPSRED) carry the JAMM motif motif.

It belongs to the UPF0758 family.

This chain is UPF0758 protein RBAM_025090, found in Bacillus velezensis (strain DSM 23117 / BGSC 10A6 / LMG 26770 / FZB42) (Bacillus amyloliquefaciens subsp. plantarum).